The chain runs to 157 residues: Transcriptional repressor NrdR (157 aa).

A zinc finger lies at 3-34; that stretch reads CPFCRHPDSRVVDSRTSDDGLSIRRRRQCPEC. The 91-residue stretch at 46–136 folds into the ATP-cone domain; it reads LSVIKRNGVV…VYQGFDSLDD (91 aa).

Belongs to the NrdR family. The cofactor is Zn(2+).

Negatively regulates transcription of bacterial ribonucleotide reductase nrd genes and operons by binding to NrdR-boxes. This is Transcriptional repressor NrdR from Clavibacter michiganensis subsp. michiganensis (strain NCPPB 382).